Reading from the N-terminus, the 367-residue chain is RNA-binding protein 48 (367 aa).

One can recognise an RRM domain in the interval 46-124 (QYLLIQGVPA…GLLHVCYAPE (79 aa)). Residues 217 to 228 (PVDRASDSSKDG) are compositionally biased toward basic and acidic residues. 3 disordered regions span residues 217 to 243 (PVDR…HNGS), 277 to 303 (RTTQ…TNPS), and 339 to 367 (EVIS…RRRI). Residues 347–356 (PPEDKPEDVN) show a composition bias toward basic and acidic residues.

The protein belongs to the RBM48 family. Component of the minor spliceosome. Within this complex, interacts with ARMC7 and PRPF8/PRP8.

Functionally, as a component of the minor spliceosome, involved in the splicing of U12-type introns in pre-mRNAs. This Pongo abelii (Sumatran orangutan) protein is RNA-binding protein 48 (RBM48).